The following is a 253-amino-acid chain: Chloride intracellular channel protein 4 (253 aa).

Alanine 2 carries the post-translational modification N-acetylalanine. Residues 2–101 (ALSMPLNGLK…EEFLEEVLCP (100 aa)) are required for insertion into the membrane. Position 4 is a phosphoserine (serine 4). An N6-acetyllysine modification is found at lysine 24. A G-site motif is present at residues 35-38 (CPFS). A helical membrane pass occupies residues 37-57 (FSQRLFMILWLKGVVFSVTTV). Residues 81 to 244 (NSEVKTDVNK…PSDKEVEIAY (164 aa)) form the GST C-terminal domain. Lysine 130 is modified (N6-acetyllysine). Phosphoserine occurs at positions 132, 167, and 236. Residue tyrosine 244 is modified to Phosphotyrosine.

The protein belongs to the chloride channel CLIC family. In terms of assembly, monomer. Interacts with HRH30. Interacts with AKAP9. As to expression, detected in blood vessels in the retina (at protein level). Expressed to the greatest extent in vivo in heart, lung, liver, kidney, and skin.

It localises to the cytoplasm. Its subcellular location is the cytoskeleton. The protein resides in the microtubule organizing center. The protein localises to the centrosome. It is found in the cytoplasmic vesicle membrane. It localises to the nucleus. Its subcellular location is the cell membrane. The protein resides in the mitochondrion. The protein localises to the cell junction. The catalysed reaction is chloride(in) = chloride(out). It catalyses the reaction thiocyanate(in) = thiocyanate(out). The enzyme catalyses nitrate(in) = nitrate(out). It carries out the reaction iodide(out) = iodide(in). The catalysed reaction is bromide(in) = bromide(out). It catalyses the reaction fluoride(in) = fluoride(out). The enzyme catalyses choline(out) = choline(in). Functionally, in the soluble state, catalyzes glutaredoxin-like thiol disulfide exchange reactions with reduced glutathione as electron donor. Can insert into membranes and form voltage-dependent multi-ion conductive channels. Membrane insertion seems to be redox-regulated and may occur only under oxidizing conditions. Has alternate cellular functions like a potential role in angiogenesis or in maintaining apical-basolateral membrane polarity during mitosis and cytokinesis. Could also promote endothelial cell proliferation and regulate endothelial morphogenesis (tubulogenesis). Promotes cell-surface expression of HRH3. The polypeptide is Chloride intracellular channel protein 4 (Clic4) (Mus musculus (Mouse)).